A 267-amino-acid polypeptide reads, in one-letter code: Hydroxyethylthiazole kinase (267 aa).

Met48 is a substrate binding site. ATP is bound by residues Arg124 and Ser170. Residue Gly197 participates in substrate binding.

This sequence belongs to the Thz kinase family. Mg(2+) is required as a cofactor.

The catalysed reaction is 5-(2-hydroxyethyl)-4-methylthiazole + ATP = 4-methyl-5-(2-phosphooxyethyl)-thiazole + ADP + H(+). The protein operates within cofactor biosynthesis; thiamine diphosphate biosynthesis; 4-methyl-5-(2-phosphoethyl)-thiazole from 5-(2-hydroxyethyl)-4-methylthiazole: step 1/1. Functionally, catalyzes the phosphorylation of the hydroxyl group of 4-methyl-5-beta-hydroxyethylthiazole (THZ). In Leptospira biflexa serovar Patoc (strain Patoc 1 / Ames), this protein is Hydroxyethylthiazole kinase.